The following is a 324-amino-acid chain: tRNA U34 carboxymethyltransferase (324 aa).

Residues K91, W105, K110, G130, 152–154, 181–182, M196, Y200, and R315 contribute to the carboxy-S-adenosyl-L-methionine site; these read DPS and IE.

Belongs to the class I-like SAM-binding methyltransferase superfamily. CmoB family. Homotetramer.

The catalysed reaction is carboxy-S-adenosyl-L-methionine + 5-hydroxyuridine(34) in tRNA = 5-carboxymethoxyuridine(34) in tRNA + S-adenosyl-L-homocysteine + H(+). Catalyzes carboxymethyl transfer from carboxy-S-adenosyl-L-methionine (Cx-SAM) to 5-hydroxyuridine (ho5U) to form 5-carboxymethoxyuridine (cmo5U) at position 34 in tRNAs. This chain is tRNA U34 carboxymethyltransferase, found in Aliivibrio fischeri (strain ATCC 700601 / ES114) (Vibrio fischeri).